Consider the following 534-residue polypeptide: CTP synthase (534 aa).

The interval 1-268 (MAAKYIFVTG…DQIVCDHLQL (268 aa)) is amidoligase domain. Serine 14 provides a ligand contact to CTP. Serine 14 is a UTP binding site. An ATP-binding site is contributed by 15–20 (SLGKGI). Tyrosine 55 lines the L-glutamine pocket. Aspartate 72 provides a ligand contact to ATP. Residues aspartate 72 and glutamate 142 each coordinate Mg(2+). Residues 149-151 (DIE), 189-194 (KSKPTQ), and lysine 225 each bind CTP. UTP contacts are provided by residues 189–194 (KSKPTQ) and lysine 225. The region spanning 293 to 534 (RIAIVGKYVE…FVRNALAAQA (242 aa)) is the Glutamine amidotransferase type-1 domain. Glycine 355 provides a ligand contact to L-glutamine. The Nucleophile; for glutamine hydrolysis role is filled by cysteine 382. Residues 383-386 (LGMQ), glutamate 406, and arginine 463 each bind L-glutamine. Active-site residues include histidine 508 and glutamate 510.

This sequence belongs to the CTP synthase family. As to quaternary structure, homotetramer.

It catalyses the reaction UTP + L-glutamine + ATP + H2O = CTP + L-glutamate + ADP + phosphate + 2 H(+). The catalysed reaction is L-glutamine + H2O = L-glutamate + NH4(+). It carries out the reaction UTP + NH4(+) + ATP = CTP + ADP + phosphate + 2 H(+). It functions in the pathway pyrimidine metabolism; CTP biosynthesis via de novo pathway; CTP from UDP: step 2/2. With respect to regulation, allosterically activated by GTP, when glutamine is the substrate; GTP has no effect on the reaction when ammonia is the substrate. The allosteric effector GTP functions by stabilizing the protein conformation that binds the tetrahedral intermediate(s) formed during glutamine hydrolysis. Inhibited by the product CTP, via allosteric rather than competitive inhibition. Functionally, catalyzes the ATP-dependent amination of UTP to CTP with either L-glutamine or ammonia as the source of nitrogen. Regulates intracellular CTP levels through interactions with the four ribonucleotide triphosphates. This chain is CTP synthase, found in Shouchella clausii (strain KSM-K16) (Alkalihalobacillus clausii).